Reading from the N-terminus, the 220-residue chain is Ras-related protein Rab-3A (220 aa).

GTP contacts are provided by Ser31, Ser32, Val33, Gly34, Lys35, Thr36, Ser37, Thr48, Pro49, Ser53, and Thr54. A Mg(2+)-binding site is contributed by Thr36. Positions 49–58 match the Switch 1 motif; sequence PAFVSTVGID. Mg(2+)-binding residues include Thr54 and Asp77. Gly80 lines the GTP pocket. The Switch 2 motif lies at 80 to 96; that stretch reads GQERYRTITTAYYRGAM. The residue at position 86 (Thr86) is a Phosphothreonine; by LRRK2. Positions 135, 136, 138, 166, and 167 each coordinate GTP. 2 positions are modified to phosphoserine: Ser188 and Ser190. Residues 194 to 220 form a disordered region; it reads ADPAVTGAKQGPQLSDQQVPPHQDCAC. S-geranylgeranyl cysteine attachment occurs at residues Cys218 and Cys220. Cys220 is modified (cysteine methyl ester).

The protein belongs to the small GTPase superfamily. Rab family. As to quaternary structure, interacts with RIMS1 and RIMS2. Interacts with Rabphilin-3A/RPH3A and Rab effector Noc2/RPH3AL. Interacts with SYTL4. Interacts with RAB3IP. Interacts with SGSM1 and SGSM3. Interacts with SYT1. Interacts with MYH9; this interaction is essential for lysosome exocytosis and plasma membrane repair. Interacts with STXBP1; this interaction promotes RAB3A dissociation from the vesicle membrane. Interacts with SNCA. The GTP-bound form interacts with REP15. Interacts with GDI1, GDI2, CHM and CHML; phosphorylation at Thr-86 disrupts these interactions. Interacts with MADD (via uDENN domain); the GTP-bound form is preferred for interaction. The cofactor is Mg(2+). Post-translationally, phosphorylation of Thr-86 in the switch II region by LRRK2 prevents the association of RAB regulatory proteins, including CHM, CHML and RAB GDP dissociation inhibitors GDI1 and GDI2. In terms of tissue distribution, specifically expressed in brain.

The protein resides in the cytoplasm. The protein localises to the cytosol. It is found in the lysosome. Its subcellular location is the cytoplasmic vesicle. It localises to the secretory vesicle. The protein resides in the cell projection. The protein localises to the axon. It is found in the cell membrane. Its subcellular location is the presynapse. It localises to the postsynapse. It catalyses the reaction GTP + H2O = GDP + phosphate + H(+). Regulated by guanine nucleotide exchange factors (GEFs) including RAB3IL1 and MADD which promote the exchange of bound GDP for free GTP. Regulated by GTPase activating proteins (GAPs) including RAB3GAP1 and TBC1D10B which increase the GTP hydrolysis activity. Inhibited by GDP dissociation inhibitors (GDIs) which prevent Rab-GDP dissociation. The small GTPases Rab are key regulators of intracellular membrane trafficking, from the formation of transport vesicles to their fusion with membranes. Rabs cycle between an inactive GDP-bound form and an active GTP-bound form that is able to recruit to membranes different sets of downstream effectors directly responsible for vesicle formation, movement, tethering and fusion. RAB3A plays a central role in regulated exocytosis and secretion. Controls the recruitment, tethering and docking of secretory vesicles to the plasma membrane. Upon stimulation, switches to its active GTP-bound form, cycles to vesicles and recruits effectors such as RIMS1, RIMS2, Rabphilin-3A/RPH3A, RPH3AL or SYTL4 to help the docking of vesicules onto the plasma membrane. Upon GTP hydrolysis by GTPase-activating protein, dissociates from the vesicle membrane allowing the exocytosis to proceed. Stimulates insulin secretion through interaction with RIMS2 or RPH3AL effectors in pancreatic beta cells. Regulates calcium-dependent lysosome exocytosis and plasma membrane repair (PMR) via the interaction with 2 effectors, SYTL4 and myosin-9/MYH9. Acts as a positive regulator of acrosome content secretion in sperm cells by interacting with RIMS1. Also plays a role in the regulation of dopamine release by interacting with synaptotagmin I/SYT. This is Ras-related protein Rab-3A from Homo sapiens (Human).